We begin with the raw amino-acid sequence, 71 residues long: Protein Tlp homolog (71 aa).

The segment at glutamate 30–isoleucine 56 is disordered. Residues arginine 39–isoleucine 56 are compositionally biased toward basic and acidic residues.

Belongs to the Tlp family.

The chain is Protein Tlp homolog from Desulforamulus reducens (strain ATCC BAA-1160 / DSM 100696 / MI-1) (Desulfotomaculum reducens).